Reading from the N-terminus, the 241-residue chain is MAVATGTVVAVVPAAGAGKRLAAGIPKAFCELDGRTLVERAVVGLLESGVVDHVVVAVPADRIAQTQWVLSQRLANSAGQHATVVAGGADRTKSVCQALATLPAPSRVGAPEFILVHDAARALTPARLIVRVVDALRAGHTAVVPALPLSDTIKAVDANGMVLGTPARVGLRAVQTPQGFATELLWCAYQRGPHLDAVDFTDDASLVEHLGGQVQVVAGDPLAFKITTQLDLLLAKKILRR.

It belongs to the IspD/TarI cytidylyltransferase family. IspD subfamily.

It carries out the reaction 2-C-methyl-D-erythritol 4-phosphate + CTP + H(+) = 4-CDP-2-C-methyl-D-erythritol + diphosphate. The protein operates within isoprenoid biosynthesis; isopentenyl diphosphate biosynthesis via DXP pathway; isopentenyl diphosphate from 1-deoxy-D-xylulose 5-phosphate: step 2/6. In terms of biological role, catalyzes the formation of 4-diphosphocytidyl-2-C-methyl-D-erythritol from CTP and 2-C-methyl-D-erythritol 4-phosphate (MEP). The polypeptide is 2-C-methyl-D-erythritol 4-phosphate cytidylyltransferase (Mycobacterium leprae (strain Br4923)).